We begin with the raw amino-acid sequence, 342 residues long: Anthranilate phosphoribosyltransferase (342 aa).

5-phospho-alpha-D-ribose 1-diphosphate contacts are provided by residues G81, G84–D85, N91–S94, K109–S117, and S121. An anthranilate-binding site is contributed by G81. Position 93 (S93) interacts with Mg(2+). N112 is an anthranilate binding site. R167 serves as a coordination point for anthranilate. Positions 226 and 227 each coordinate Mg(2+).

Belongs to the anthranilate phosphoribosyltransferase family. In terms of assembly, homodimer. The cofactor is Mg(2+).

It catalyses the reaction N-(5-phospho-beta-D-ribosyl)anthranilate + diphosphate = 5-phospho-alpha-D-ribose 1-diphosphate + anthranilate. Its pathway is amino-acid biosynthesis; L-tryptophan biosynthesis; L-tryptophan from chorismate: step 2/5. Functionally, catalyzes the transfer of the phosphoribosyl group of 5-phosphorylribose-1-pyrophosphate (PRPP) to anthranilate to yield N-(5'-phosphoribosyl)-anthranilate (PRA). The chain is Anthranilate phosphoribosyltransferase from Marinobacter nauticus (strain ATCC 700491 / DSM 11845 / VT8) (Marinobacter aquaeolei).